A 965-amino-acid polypeptide reads, in one-letter code: Aminopeptidase N (965 aa).

The Cytoplasmic portion of the chain corresponds to alanine 2–serine 8. The chain crosses the membrane as a helical; Signal-anchor for type II membrane protein span at residues lysine 9–valine 32. The cytosolic Ser/Thr-rich junction stretch occupies residues tyrosine 33–serine 68. The Extracellular segment spans residues tyrosine 33–serine 965. The interval serine 44–serine 68 is disordered. A compositionally biased stretch (low complexity) spans alanine 47–alanine 64. Residues lysine 69–serine 965 form a metalloprotease region. N-linked (GlcNAc...) asparagine glycosylation is found at asparagine 114 and asparagine 128. Tyrosine 176 is subject to Sulfotyrosine. N-linked (GlcNAc...) asparagine glycans are attached at residues asparagine 234, asparagine 242, and asparagine 264. Residue glycine 351–asparagine 355 coordinates substrate. Histidine 387 is a Zn(2+) binding site. Glutamate 388 acts as the Proton acceptor in catalysis. Positions 391 and 410 each coordinate Zn(2+). Residues asparagine 555, asparagine 606, and asparagine 624 are each glycosylated (N-linked (GlcNAc...) asparagine). Cysteine 760 and cysteine 767 are joined by a disulfide. Asparagine 780 carries an N-linked (GlcNAc...) asparagine glycan. A disulfide bridge connects residues cysteine 797 and cysteine 833. Tyrosine 852 carries the post-translational modification Phosphotyrosine.

Belongs to the peptidase M1 family. As to quaternary structure, homodimer. Interacts with SLC6A19. The cofactor is Zn(2+). Post-translationally, sulfated. In terms of processing, N- and O-glycosylated. May undergo proteolysis and give rise to a soluble form. As to expression, widely distributed throughout the CNS. Particularly abundant in kidney and intestinal microvilli, also detected in lung and liver. Weakly expressed in heart and aorta.

Its subcellular location is the cell membrane. It catalyses the reaction Release of an N-terminal amino acid, Xaa-|-Yaa- from a peptide, amide or arylamide. Xaa is preferably Ala, but may be most amino acids including Pro (slow action). When a terminal hydrophobic residue is followed by a prolyl residue, the two may be released as an intact Xaa-Pro dipeptide.. Its function is as follows. Broad specificity aminopeptidase which plays a role in the final digestion of peptides generated from hydrolysis of proteins by gastric and pancreatic proteases. Also involved in the processing of various peptides including peptide hormones, such as angiotensin III and IV, neuropeptides, and chemokines. May also be involved the cleavage of peptides bound to major histocompatibility complex class II molecules of antigen presenting cells. May have a role in angiogenesis and promote cholesterol crystallization. May have a role in amino acid transport by acting as binding partner of amino acid transporter SLC6A19 and regulating its activity. This Rattus norvegicus (Rat) protein is Aminopeptidase N (Anpep).